The following is a 283-amino-acid chain: Pantothenate synthetase (283 aa).

Residue 30–37 (MGNLHDGH) coordinates ATP. The Proton donor role is filled by His-37. Gln-61 serves as a coordination point for (R)-pantoate. Residue Gln-61 participates in beta-alanine binding. Residue 149 to 152 (GEKD) participates in ATP binding. Gln-155 lines the (R)-pantoate pocket. 186-189 (LSSR) contacts ATP.

It belongs to the pantothenate synthetase family. Homodimer.

The protein localises to the cytoplasm. It carries out the reaction (R)-pantoate + beta-alanine + ATP = (R)-pantothenate + AMP + diphosphate + H(+). It participates in cofactor biosynthesis; (R)-pantothenate biosynthesis; (R)-pantothenate from (R)-pantoate and beta-alanine: step 1/1. Functionally, catalyzes the condensation of pantoate with beta-alanine in an ATP-dependent reaction via a pantoyl-adenylate intermediate. This is Pantothenate synthetase from Escherichia coli O6:K15:H31 (strain 536 / UPEC).